Consider the following 91-residue polypeptide: Salivary lectin pathway inhibitor (91 aa).

The first 21 residues, M1 to A21, serve as a signal peptide directing secretion. Residues N26 and N87 are each glycosylated (N-linked (GlcNAc...) asparagine).

It belongs to the salp14 family. In terms of processing, glycosylated; deglycosylation largely abrogates the complement inhibitory effect. Nymph salivary gland (at protein level). Saliva (at protein level). Not detected in midgut.

It localises to the secreted. Inhibits the lectin pathway of complement system activation in the host by reducing binding of mannose-binding lectin and L-ficolin to their ligands. Does not affect the classical and alternative pathways of complement system activation in the host. In terms of biological role, (Microbial infection) Protects Borrelia garinii (strain A87S) from host complement-mediated killing by preventing deposition of host C5b-9 membrane attack complexes on the surface of spirochetes. Inhibits phagocytosis of B.garinii (strain A87S) by human neutrophils. Impairs Borrelia-induced complement-mediated chemotaxis of human polymorphonuclear leukocytes. Functionally, (Microbial infection) Protects Borrelia burgdorferi (strain N40), which is resistant to normal human serum, from Borrelia-opsonizing antibody-mediated complement-dependent killing. This chain is Salivary lectin pathway inhibitor, found in Ixodes scapularis (Black-legged tick).